Here is a 530-residue protein sequence, read N- to C-terminus: Glucose-6-phosphate isomerase (530 aa).

Catalysis depends on E356, which acts as the Proton donor. Catalysis depends on residues H387 and K502.

This sequence belongs to the GPI family.

The protein resides in the cytoplasm. It catalyses the reaction alpha-D-glucose 6-phosphate = beta-D-fructose 6-phosphate. It participates in carbohydrate biosynthesis; gluconeogenesis. Its pathway is carbohydrate degradation; glycolysis; D-glyceraldehyde 3-phosphate and glycerone phosphate from D-glucose: step 2/4. Catalyzes the reversible isomerization of glucose-6-phosphate to fructose-6-phosphate. The protein is Glucose-6-phosphate isomerase of Borreliella afzelii (strain PKo) (Borrelia afzelii).